Consider the following 811-residue polypeptide: Beta-catenin homolog sys-1 (811 aa).

The disordered stretch occupies residues 1–105; the sequence is MHSTGEPQRG…SRGPAAPAQN (105 aa). Residues 64-103 show a composition bias toward low complexity; the sequence is QQQQMTPQALSTQQQQQVQQQQQRQLYSSPSPSRGPAAPA.

As to quaternary structure, interacts with TCF transcription factor pop-1 (via N-terminal region); interaction is direct.

Its subcellular location is the nucleus. The protein resides in the cytoplasm. The protein localises to the cytoplasmic granule. It localises to the cytoskeleton. It is found in the microtubule organizing center. Its subcellular location is the centrosome. The protein resides in the chromosome. The protein localises to the centromere. It localises to the kinetochore. In terms of biological role, transcription coregulator. Part of the Wnt signaling asymmetry pathway, probably acting downstream of putative frizzled ligand mom-2, Wnt/frizzled receptors lin-17 and mom-5, and dishevelled homolog dsh-2. Activates or represses target gene expression, depending on upstream Wnt signals and interactions with transcription factors, such as pop-1. Required for the activation of Wnt-responsive genes in the E blastomere; thereby leading to a role in endoderm specification and gut development. Reciprocal distribution patterns of sys-1 and pop-1/TCF in the daughters of anterior-posterior cell divisions functions in specifying cell fate; a higher sys-1 to pop-1 ratio promotes the posterior cell fate, whereas a low sys-1 to pop-1 ratio promotes the anterior fate. Represses expression of homeobox ttx-3 in neuroblasts of the SIAD/SIBV lineage, perhaps acting by blocking its transcriptional activation by a complex consisting of ref-2 and pop-1. Required for early organization of the hermaphrodite, but not the male, gonad; involved in generation of regulatory cells, known as the distal tip cells (DTC), and in formation of the somatic gonadal primordium. Involved in regulating asymmetric divisions of the somatic gonadal precursor cells (SGP), Z1 and Z4. The polypeptide is Beta-catenin homolog sys-1 (Caenorhabditis elegans).